Here is a 444-residue protein sequence, read N- to C-terminus: Phosphoglucosamine mutase (444 aa).

S103 serves as the catalytic Phosphoserine intermediate. Residues S103, D242, D244, and D246 each contribute to the Mg(2+) site. S103 bears the Phosphoserine mark.

The protein belongs to the phosphohexose mutase family. The cofactor is Mg(2+). In terms of processing, activated by phosphorylation.

The catalysed reaction is alpha-D-glucosamine 1-phosphate = D-glucosamine 6-phosphate. Catalyzes the conversion of glucosamine-6-phosphate to glucosamine-1-phosphate. This is Phosphoglucosamine mutase from Hydrogenovibrio crunogenus (strain DSM 25203 / XCL-2) (Thiomicrospira crunogena).